Consider the following 62-residue polypeptide: UPF0434 protein ASA_1553 (62 aa).

It belongs to the UPF0434 family.

The protein is UPF0434 protein ASA_1553 of Aeromonas salmonicida (strain A449).